A 96-amino-acid chain; its full sequence is Large ribosomal subunit protein bL27 (96 aa).

Residues 1 to 9 constitute a propeptide that is removed on maturation; sequence MLRLDLQFF. Residues 13–35 are disordered; sequence KGVGSTKNGRDSQSKRLGAKRAD.

It belongs to the bacterial ribosomal protein bL27 family. In terms of processing, the N-terminus is cleaved by ribosomal processing cysteine protease Prp.

The protein is Large ribosomal subunit protein bL27 of Bacillus cereus (strain B4264).